The chain runs to 241 residues: Uridylate kinase (241 aa).

Residue 9–10 (GS) participates in ATP binding. Residue Gly-44 coordinates UMP. ATP is bound by residues Gly-45 and Arg-49. Residues Asp-66 and 114-120 (VVAGQTT) each bind UMP. Positions 140, 146, and 149 each coordinate ATP.

It belongs to the UMP kinase family. As to quaternary structure, homohexamer.

The protein resides in the cytoplasm. The catalysed reaction is UMP + ATP = UDP + ADP. Its pathway is pyrimidine metabolism; CTP biosynthesis via de novo pathway; UDP from UMP (UMPK route): step 1/1. Inhibited by UTP. In terms of biological role, catalyzes the reversible phosphorylation of UMP to UDP. The chain is Uridylate kinase from Halobacterium salinarum (strain ATCC 29341 / DSM 671 / R1).